Reading from the N-terminus, the 270-residue chain is Phospholysine phosphohistidine inorganic pyrophosphate phosphatase (270 aa).

The Mg(2+) site is built by Asp-14 and Ser-16. Residues 14-16, 52-53, and Lys-187 contribute to the substrate site; these read DVS and TN. Asp-212 is a binding site for Mg(2+).

Belongs to the HAD-like hydrolase superfamily. Mg(2+) serves as cofactor.

Its subcellular location is the cytoplasm. It is found in the nucleus. It catalyses the reaction diphosphate + H2O = 2 phosphate + H(+). Functionally, phosphatase that hydrolyzes imidodiphosphate, 3-phosphohistidine and 6-phospholysine. Has broad substrate specificity and can also hydrolyze inorganic diphosphate, but with lower efficiency. The chain is Phospholysine phosphohistidine inorganic pyrophosphate phosphatase (lhpp) from Xenopus laevis (African clawed frog).